The primary structure comprises 371 residues: tRNA-specific 2-thiouridylase MnmA (371 aa).

ATP-binding positions include 14–21 and methionine 40; that span reads GMSGGVDS. Residues 100 to 102 are interaction with target base in tRNA; that stretch reads NPD. Cysteine 105 serves as the catalytic Nucleophile. Cysteines 105 and 205 form a disulfide. Glycine 129 serves as a coordination point for ATP. Residues 155–157 are interaction with tRNA; sequence KDQ. The active-site Cysteine persulfide intermediate is the cysteine 205. An interaction with tRNA region spans residues 321–322; that stretch reads RY.

Belongs to the MnmA/TRMU family.

It is found in the cytoplasm. It carries out the reaction S-sulfanyl-L-cysteinyl-[protein] + uridine(34) in tRNA + AH2 + ATP = 2-thiouridine(34) in tRNA + L-cysteinyl-[protein] + A + AMP + diphosphate + H(+). Its function is as follows. Catalyzes the 2-thiolation of uridine at the wobble position (U34) of tRNA, leading to the formation of s(2)U34. In Bordetella pertussis (strain Tohama I / ATCC BAA-589 / NCTC 13251), this protein is tRNA-specific 2-thiouridylase MnmA.